Here is a 170-residue protein sequence, read N- to C-terminus: CASP-like protein 2D1 (170 aa).

At 1–4 the chain is on the cytoplasmic side; that stretch reads MLKL. A helical membrane pass occupies residues 5–25; the sequence is LDFSLRLSVIPLSVATIWLTV. Residues 26 to 47 are Extracellular-facing; that stretch reads TNKQDNSIYGYLKYSDLTGLKY. A helical transmembrane segment spans residues 48 to 68; it reads MVFISGICASYAFIAAVSTWI. Residues 69–83 lie on the Cytoplasmic side of the membrane; it reads RCIVTKTWLFFVSDQ. A helical transmembrane segment spans residues 84–104; the sequence is IVAYLMVTSGTAVLEILYLAY. Residues 105–127 are Extracellular-facing; that stretch reads NGDREVSWSEACTSYGKFCYRMK. A helical transmembrane segment spans residues 128–148; that stretch reads LAVILHALALSCFIILAVISA. The Cytoplasmic portion of the chain corresponds to 149 to 170; sequence YRAFSIFEPPLVPSKVVEEDRA.

This sequence belongs to the Casparian strip membrane proteins (CASP) family. As to quaternary structure, homodimer and heterodimers.

The protein localises to the cell membrane. The protein is CASP-like protein 2D1 of Populus trichocarpa (Western balsam poplar).